A 430-amino-acid chain; its full sequence is Chaperone SurA (430 aa).

The first 25 residues, 1-25 (MQIIKTTIATFTAIAFTGAASFTSA), serve as a signal peptide directing secretion. PpiC domains lie at 176-277 (SPDY…KLYE) and 286-385 (VNQT…KVEE).

Its subcellular location is the periplasm. It carries out the reaction [protein]-peptidylproline (omega=180) = [protein]-peptidylproline (omega=0). Chaperone involved in the correct folding and assembly of outer membrane proteins. Recognizes specific patterns of aromatic residues and the orientation of their side chains, which are found more frequently in integral outer membrane proteins. May act in both early periplasmic and late outer membrane-associated steps of protein maturation. In Saccharophagus degradans (strain 2-40 / ATCC 43961 / DSM 17024), this protein is Chaperone SurA.